The following is a 372-amino-acid chain: NAD(P)H-quinone oxidoreductase subunit 1 (372 aa).

The next 8 membrane-spanning stretches (helical) occupy residues leucine 27–valine 47, leucine 97–valine 117, valine 128–methionine 148, alanine 166–methionine 186, leucine 204–leucine 224, valine 266–valine 286, serine 308–leucine 328, and phenylalanine 347–proline 367.

It belongs to the complex I subunit 1 family. In terms of assembly, NDH-1 is composed of at least 11 different subunits.

It is found in the cellular thylakoid membrane. The catalysed reaction is a plastoquinone + NADH + (n+1) H(+)(in) = a plastoquinol + NAD(+) + n H(+)(out). The enzyme catalyses a plastoquinone + NADPH + (n+1) H(+)(in) = a plastoquinol + NADP(+) + n H(+)(out). NDH-1 shuttles electrons from an unknown electron donor, via FMN and iron-sulfur (Fe-S) centers, to quinones in the respiratory and/or the photosynthetic chain. The immediate electron acceptor for the enzyme in this species is believed to be plastoquinone. Couples the redox reaction to proton translocation, and thus conserves the redox energy in a proton gradient. This chain is NAD(P)H-quinone oxidoreductase subunit 1, found in Prochlorococcus marinus (strain MIT 9313).